The chain runs to 254 residues: 5'/3'-nucleotidase SurE (254 aa).

Asp-9, Asp-10, Ser-40, and Asn-93 together coordinate a divalent metal cation.

Belongs to the SurE nucleotidase family. It depends on a divalent metal cation as a cofactor.

Its subcellular location is the cytoplasm. The enzyme catalyses a ribonucleoside 5'-phosphate + H2O = a ribonucleoside + phosphate. The catalysed reaction is a ribonucleoside 3'-phosphate + H2O = a ribonucleoside + phosphate. It carries out the reaction [phosphate](n) + H2O = [phosphate](n-1) + phosphate + H(+). Functionally, nucleotidase with a broad substrate specificity as it can dephosphorylate various ribo- and deoxyribonucleoside 5'-monophosphates and ribonucleoside 3'-monophosphates with highest affinity to 3'-AMP. Also hydrolyzes polyphosphate (exopolyphosphatase activity) with the preference for short-chain-length substrates (P20-25). Might be involved in the regulation of dNTP and NTP pools, and in the turnover of 3'-mononucleotides produced by numerous intracellular RNases (T1, T2, and F) during the degradation of various RNAs. The chain is 5'/3'-nucleotidase SurE from Proteus mirabilis (strain HI4320).